The following is a 93-amino-acid chain: Acylphosphatase (93 aa).

An Acylphosphatase-like domain is found at 3-93 (KQQYFISGKV…FQFNNFKIYY (91 aa)). Catalysis depends on residues Arg18 and Asn36.

The protein belongs to the acylphosphatase family.

It carries out the reaction an acyl phosphate + H2O = a carboxylate + phosphate + H(+). The protein is Acylphosphatase (acyP) of Borrelia garinii subsp. bavariensis (strain ATCC BAA-2496 / DSM 23469 / PBi) (Borreliella bavariensis).